Reading from the N-terminus, the 387-residue chain is Transmembrane protein 120 homolog (387 aa).

A coiled-coil region spans residues Met-1–Gln-39. N-linked (GlcNAc...) asparagine glycosylation occurs at Asn-111. 6 consecutive transmembrane segments (helical) span residues Phe-130–Tyr-150, Leu-155–Leu-175, Phe-191–Ile-211, Phe-216–Leu-238, Gly-264–Trp-284, and Val-302–Val-322. Positions Arg-346 to Thr-387 are disordered. Residues Ser-352, Ser-354, and Ser-365 each carry the phosphoserine modification. The span at Ser-352–Pro-381 shows a compositional bias: low complexity.

The protein belongs to the TMEM120 family.

It is found in the membrane. The protein is Transmembrane protein 120 homolog of Drosophila melanogaster (Fruit fly).